A 358-amino-acid chain; its full sequence is Methylthioribose-1-phosphate isomerase (358 aa).

Substrate is bound by residues 54-56 and glutamine 205; that span reads CGA. The active-site Proton donor is aspartate 246. Position 256–257 (256–257) interacts with substrate; it reads NQ.

This sequence belongs to the eIF-2B alpha/beta/delta subunits family. MtnA subfamily.

It catalyses the reaction 5-(methylsulfanyl)-alpha-D-ribose 1-phosphate = 5-(methylsulfanyl)-D-ribulose 1-phosphate. It participates in amino-acid biosynthesis; L-methionine biosynthesis via salvage pathway; L-methionine from S-methyl-5-thio-alpha-D-ribose 1-phosphate: step 1/6. Catalyzes the interconversion of methylthioribose-1-phosphate (MTR-1-P) into methylthioribulose-1-phosphate (MTRu-1-P). The chain is Methylthioribose-1-phosphate isomerase from Pseudomonas fluorescens (strain ATCC BAA-477 / NRRL B-23932 / Pf-5).